Here is a 1208-residue protein sequence, read N- to C-terminus: Calmodulin-binding transcription activator 2 (1208 aa).

The segment at residues 30-160 is a DNA-binding region (CG-1); the sequence is RCPLLPPERL…YLNVPALEDC (131 aa). Positions 78–86 match the Nuclear localization signal motif; that stretch reads NRKKVKYRK. Disordered stretches follow at residues 269–328, 366–418, and 437–507; these read ISHS…SRGG, VGSE…PCPA, and QLGA…ELEP. A compositionally biased stretch (pro residues) spans 275–288; it reads PEPPPLIAPLPPEL. Composition is skewed to low complexity over residues 294–305 and 319–328; these read SPSSSSSSSSSS and TSRGGSSRGG. 2 stretches are compositionally biased toward pro residues: residues 371–380 and 464–476; these read SAPPAPPSPA and TVPPVPSSPPSSP. Residues 544 to 622 enclose the IPT/TIG domain; sequence DFSPEWSYPE…LSASVLFEYR (79 aa). 3 ANK repeats span residues 717-750, 762-792, and 796-826; these read RGMSLLHLAAAQGYARLIETLSQWRSVETGSLDL, FSCTPLMWACALGHLEAAVLLFCWNRQALSI, and LGRLPLSVAHSRGHVRLARCLEELQRQELSV. 2 disordered regions span residues 826–881 and 908–936; these read VEHP…ASDI and NSKEPAPSPCGPPLAQDNGAAPEDADSPP. The segment covering 829–853 has biased composition (low complexity); the sequence is PLALSPPSSSPDTGLSSASSPSELS. IQ domains lie at 1054 to 1083 and 1107 to 1136; these read LYEAARVIQTAFRKYKGRRLKEQQEVAAAV and MTQAAILIQSKFRSYYEQKRFQQSRRAAVL. A disordered region spans residues 1144–1166; that stretch reads YRRRPGPPHRPSGPLPARNKGTF.

Belongs to the CAMTA family. As to quaternary structure, may interact with calmodulin.

Its subcellular location is the nucleus. Functionally, transcription activator. May act as tumor suppressor. The chain is Calmodulin-binding transcription activator 2 (Camta2) from Mus musculus (Mouse).